A 233-amino-acid chain; its full sequence is Large ribosomal subunit protein uL3 (233 aa).

A disordered region spans residues 145–172 (FGSQRASHGNSRSHRVPGSIGQAQDPGR). Q168 is subject to N5-methylglutamine.

This sequence belongs to the universal ribosomal protein uL3 family. Part of the 50S ribosomal subunit. Forms a cluster with proteins L14 and L19. Methylated by PrmB.

In terms of biological role, one of the primary rRNA binding proteins, it binds directly near the 3'-end of the 23S rRNA, where it nucleates assembly of the 50S subunit. In Bordetella petrii (strain ATCC BAA-461 / DSM 12804 / CCUG 43448), this protein is Large ribosomal subunit protein uL3.